We begin with the raw amino-acid sequence, 564 residues long: 5-hydroxytryptamine receptor 1 (564 aa).

The segment at 1 to 26 (MALSGQDWRRHQSHRQHRNHRTQGNH) is disordered. Basic residues predominate over residues 11-23 (HQSHRQHRNHRTQ). The helical transmembrane segment at 29 to 51 (LISTATLTLFVLFLSSWIAYAAG) threads the bilayer. 9 repeat units span residues 89–90 (GS), 91–92 (GS), 93–94 (GS), 95–96 (GS), 97–98 (GS), 99–100 (GS), 101–102 (GS), 103–104 (GS), and 105–106 (GS). The 9 X 2 AA tandem repeats of G-S stretch occupies residues 89 to 106 (GSGSGSGSGSGSGSGSGS). Residues 165–188 (VSIVLLIVILGTVVGNVLVCIAVC) traverse the membrane as a helical segment. The Cytoplasmic portion of the chain corresponds to 189–198 (MVRKLRRPCN). The chain crosses the membrane as a helical span at residues 199-222 (YLLVSLALSDLCVALLVMPMALLY). Over 223–236 (EVLEKWNFGPLLCD) the chain is Extracellular. Cysteine 235 and cysteine 314 are joined by a disulfide. The helical transmembrane segment at 237–258 (IWVSFDVLCCTASILNLCAISV) threads the bilayer. The agonist binding stretch occupies residues 238–247 (WVSFDVLCCT). Ergotamine is bound by residues aspartate 242 and threonine 247. Positions 259-261 (DRY) match the DRY motif; important for ligand-induced conformation changes motif. The Cytoplasmic segment spans residues 259–278 (DRYLAITKPLEYGVKRTPRR). The helical transmembrane segment at 279-302 (MMLCVGIVWLAAACISLPPLLILG) threads the bilayer. Residues 303–330 (NEHEDEEGQPICTVCQNFAYQIYATLGS) are Extracellular-facing. A helical transmembrane segment spans residues 331-353 (FYIPLSVMLFVYYQIFRAARRIV). Residues 354 to 454 (LEEKRAQTHL…QLAKEKKAST (101 aa)) are Cytoplasmic-facing. Residues 367–396 (LNGTGSPSAPQAPPLGHTELASSGNGQRHS) are disordered. The span at 386–396 (LASSGNGQRHS) shows a compositional bias: polar residues. A helical transmembrane segment spans residues 455–476 (TLGIIMSAFTVCWLPFFILALI). Residues 477–487 (RPFETMHVPAS) are Extracellular-facing. Residues 488–510 (LSSLFLWLGYANSLLNPIIYATL) form a helical membrane-spanning segment. Residues 503–507 (NPIIY) carry the NPxxY motif; important for ligand-induced conformation changes and signaling motif. The Cytoplasmic portion of the chain corresponds to 511-564 (NRDFRKPFQEILYFRCSSLNTMMRENYYQDQYGEPPSQRVMLGDERHGARESFL).

This sequence belongs to the G-protein coupled receptor 1 family. 5-hydroxytryptamine receptor subfamily. In terms of tissue distribution, expressed predominantly in adult heads.

Its subcellular location is the cell membrane. G-protein coupled receptor for 5-hydroxytryptamine (serotonin). Also functions as a receptor for various alkaloids. Ligand binding causes a conformation change that triggers signaling via guanine nucleotide-binding proteins (G proteins) and modulates the activity of down-stream effectors, such as adenylate cyclase. Signaling activates adenylate cyclase activity. In Drosophila melanogaster (Fruit fly), this protein is 5-hydroxytryptamine receptor 1 (5-HT7).